The following is a 661-amino-acid chain: Pumilio domain-containing protein C56F2.08c (661 aa).

Residues 1–74 (MLYVSNLPVG…GPVQVMLAKP (74 aa)) enclose the RRM domain. Phosphoserine is present on S102. T104 bears the Phosphothreonine mark. S105 is modified (phosphoserine). The 354-residue stretch at 129 to 482 (INLDIVDSMI…RLMEEVGMTS (354 aa)) folds into the PUM-HD domain. 4 Pumilio repeats span residues 191 to 226 (SMLD…AMLE), 227 to 263 (RIAP…LIVK), 264 to 302 (HLRP…VMAR), and 374 to 410 (HLAT…LLLK). Residues S482, S486, S488, and S490 each carry the phosphoserine modification.

The protein localises to the cytoplasm. This Schizosaccharomyces pombe (strain 972 / ATCC 24843) (Fission yeast) protein is Pumilio domain-containing protein C56F2.08c.